The sequence spans 264 residues: Acyl-[acyl-carrier-protein]--UDP-N-acetylglucosamine O-acyltransferase (264 aa).

It belongs to the transferase hexapeptide repeat family. LpxA subfamily. As to quaternary structure, homotrimer.

It is found in the cytoplasm. The enzyme catalyses a (3R)-hydroxyacyl-[ACP] + UDP-N-acetyl-alpha-D-glucosamine = a UDP-3-O-[(3R)-3-hydroxyacyl]-N-acetyl-alpha-D-glucosamine + holo-[ACP]. Its pathway is glycolipid biosynthesis; lipid IV(A) biosynthesis; lipid IV(A) from (3R)-3-hydroxytetradecanoyl-[acyl-carrier-protein] and UDP-N-acetyl-alpha-D-glucosamine: step 1/6. Functionally, involved in the biosynthesis of lipid A, a phosphorylated glycolipid that anchors the lipopolysaccharide to the outer membrane of the cell. This Actinobacillus pleuropneumoniae serotype 7 (strain AP76) protein is Acyl-[acyl-carrier-protein]--UDP-N-acetylglucosamine O-acyltransferase.